The following is a 576-amino-acid chain: Nuclear protein localization protein 4 homolog (576 aa).

2 disordered regions span residues L67 to S96 and Q200 to S219. The span at N72–N94 shows a compositional bias: low complexity. Residues K208 to K218 are compositionally biased toward basic and acidic residues. Positions G295–A430 constitute an MPN domain.

It belongs to the NPL4 family.

The protein operates within protein degradation; proteasomal ubiquitin-dependent pathway. Its function is as follows. May be part of a complex that binds ubiquitinated proteins and that is necessary for the export of misfolded proteins from the ER to the cytoplasm, where they are degraded by the proteasome. This Dictyostelium discoideum (Social amoeba) protein is Nuclear protein localization protein 4 homolog (nploc4).